Here is a 211-residue protein sequence, read N- to C-terminus: ATP phosphoribosyltransferase (211 aa).

The protein belongs to the ATP phosphoribosyltransferase family. Short subfamily. In terms of assembly, heteromultimer composed of HisG and HisZ subunits.

It localises to the cytoplasm. The catalysed reaction is 1-(5-phospho-beta-D-ribosyl)-ATP + diphosphate = 5-phospho-alpha-D-ribose 1-diphosphate + ATP. Its pathway is amino-acid biosynthesis; L-histidine biosynthesis; L-histidine from 5-phospho-alpha-D-ribose 1-diphosphate: step 1/9. Its function is as follows. Catalyzes the condensation of ATP and 5-phosphoribose 1-diphosphate to form N'-(5'-phosphoribosyl)-ATP (PR-ATP). Has a crucial role in the pathway because the rate of histidine biosynthesis seems to be controlled primarily by regulation of HisG enzymatic activity. In Lacticaseibacillus casei (strain BL23) (Lactobacillus casei), this protein is ATP phosphoribosyltransferase.